Reading from the N-terminus, the 834-residue chain is Protein ROOT HAIR DEFECTIVE 3 homolog 2 (834 aa).

Residues 1–683 (MGENDDGCST…EAHKRNNNWL (683 aa)) are Cytoplasmic-facing. One can recognise a GB1/RHD3-type G domain in the interval 37–252 (GLSYAVVAIM…ISPGGLAGDR (216 aa)). 47 to 54 (GPQSSGKS) is a GTP binding site. A coiled-coil region spans residues 214–241 (MIVALSSYEEKEKQFEQEVAELRQRFFH). Residues 684–704 (PPAWAIVLMIVLGFNEFMMLL) traverse the membrane as a helical segment. Residues 705–707 (KNP) are Lumenal-facing. A helical transmembrane segment spans residues 708–728 (LYLLGFFVAFLLSKALWVQLD). At 729–834 (IPREFQHGAV…NVQESEISQM (106 aa)) the chain is on the cytoplasmic side. A compositionally biased stretch (polar residues) spans 767–783 (TTQEVPDLSASQTYRQQ). Positions 767–834 (TTQEVPDLSA…NVQESEISQM (68 aa)) are disordered. Over residues 784–803 (SPSHSISSTISESVASNISS) the composition is skewed to low complexity. The span at 823 to 834 (TNNVQESEISQM) shows a compositional bias: polar residues.

Belongs to the TRAFAC class dynamin-like GTPase superfamily. GB1/RHD3 GTPase family. RHD3 subfamily. As to expression, expressed in roots, leaves, stems and flowers.

It localises to the endoplasmic reticulum membrane. Probable GTP-binding protein that may be involved in cell development. In Arabidopsis thaliana (Mouse-ear cress), this protein is Protein ROOT HAIR DEFECTIVE 3 homolog 2.